The primary structure comprises 314 residues: MLEVFFLGTGGIMPTRERNVPAIALRYKGEIILFDAGEGTIRQMNTAKLSPMKVDKIFITHFHGDHYLGIPALIQTMNLWDRQKPLHIYGPKYTFQFVQNLLNSGFFRPGFDIHVHELGETRLKFGDYEIWSFKVEHGIPALGYVFKEKDRRGKFLKEKLREYGLEEGPILGKLEREGKIEWNGRIIRLEDVTGPRRKGLKIVYTGDTEPCERVKLFSERADLLIHEATYLNPGDRGDSYHSTVEEACDTARRAKVKLLALFHRAFRYSYEDYVEEALKICESLGVRAVVPRDFDVITFKSGTWELRNLLEERE.

The Zn(2+) site is built by H61, H63, D65, H66, H137, D207, and H263. D65 acts as the Proton acceptor in catalysis.

It belongs to the RNase Z family. In terms of assembly, homodimer. Requires Zn(2+) as cofactor.

The catalysed reaction is Endonucleolytic cleavage of RNA, removing extra 3' nucleotides from tRNA precursor, generating 3' termini of tRNAs. A 3'-hydroxy group is left at the tRNA terminus and a 5'-phosphoryl group is left at the trailer molecule.. In terms of biological role, zinc phosphodiesterase, which displays some tRNA 3'-processing endonuclease activity. Probably involved in tRNA maturation, by removing a 3'-trailer from precursor tRNA. This chain is Ribonuclease Z, found in Thermococcus kodakarensis (strain ATCC BAA-918 / JCM 12380 / KOD1) (Pyrococcus kodakaraensis (strain KOD1)).